Consider the following 342-residue polypeptide: Probable dual-specificity RNA methyltransferase RlmN (342 aa).

E91 functions as the Proton acceptor in the catalytic mechanism. Residues 97-327 (YKHGNSICVS…TTIRREMGAD (231 aa)) form the Radical SAM core domain. Cysteines 104 and 332 form a disulfide. 3 residues coordinate [4Fe-4S] cluster: C111, C115, and C118. S-adenosyl-L-methionine contacts are provided by residues 158–159 (GE), S190, 213–215 (SLH), and N289. The S-methylcysteine intermediate role is filled by C332.

The protein belongs to the radical SAM superfamily. RlmN family. [4Fe-4S] cluster is required as a cofactor.

The protein resides in the cytoplasm. It carries out the reaction adenosine(2503) in 23S rRNA + 2 reduced [2Fe-2S]-[ferredoxin] + 2 S-adenosyl-L-methionine = 2-methyladenosine(2503) in 23S rRNA + 5'-deoxyadenosine + L-methionine + 2 oxidized [2Fe-2S]-[ferredoxin] + S-adenosyl-L-homocysteine. The catalysed reaction is adenosine(37) in tRNA + 2 reduced [2Fe-2S]-[ferredoxin] + 2 S-adenosyl-L-methionine = 2-methyladenosine(37) in tRNA + 5'-deoxyadenosine + L-methionine + 2 oxidized [2Fe-2S]-[ferredoxin] + S-adenosyl-L-homocysteine. Specifically methylates position 2 of adenine 2503 in 23S rRNA and position 2 of adenine 37 in tRNAs. The polypeptide is Probable dual-specificity RNA methyltransferase RlmN (Clostridium botulinum (strain Loch Maree / Type A3)).